The primary structure comprises 52 residues: Mitogenic lectin alpha chain (52 aa).

This sequence belongs to the leguminous lectin family. Tetramer of two alpha and two beta chains.

This Vicia sativa (Spring vetch) protein is Mitogenic lectin alpha chain.